The following is a 529-amino-acid chain: Lysine--tRNA ligase (529 aa).

The 'HIGH' region motif lies at 29 to 37 (ISGSVHIGN). The 'KMSKS' region signature appears at 274-278 (AMSKS). Residue lysine 277 participates in ATP binding.

This sequence belongs to the class-I aminoacyl-tRNA synthetase family.

It is found in the cytoplasm. The catalysed reaction is tRNA(Lys) + L-lysine + ATP = L-lysyl-tRNA(Lys) + AMP + diphosphate. This chain is Lysine--tRNA ligase, found in Methanosphaera stadtmanae (strain ATCC 43021 / DSM 3091 / JCM 11832 / MCB-3).